Here is a 415-residue protein sequence, read N- to C-terminus: Zinc finger protein ZFMSA12A (415 aa).

A disordered region spans residues 1–36 (MGIQDARWPSEDEETHLLDSSSAEQTRGEKCSDSTP). C2H2-type zinc fingers lie at residues 78–100 (HKCT…QRLH), 106–129 (YRCS…RTQC), 134–156 (YICI…QCVH), 161–183 (FDCS…ELTH), 189–211 (FTCR…QKIH), 217–239 (NQCM…EVRH), 245–267 (QICA…MRSH), 273–295 (FQCT…VRTH), 301–323 (YLCS…RRTH), 329–351 (YKCS…MRVH), 357–379 (YVCS…SMNH), and 385–407 (YACQ…LKTH).

The protein resides in the nucleus. The polypeptide is Zinc finger protein ZFMSA12A (Micropterus salmoides (Largemouth bass)).